The following is a 509-amino-acid chain: Maturase K (509 aa).

Belongs to the intron maturase 2 family. MatK subfamily.

Its subcellular location is the plastid. It localises to the chloroplast. Functionally, usually encoded in the trnK tRNA gene intron. Probably assists in splicing its own and other chloroplast group II introns. The protein is Maturase K of Nicotiana glutinosa (Tobacco).